Consider the following 334-residue polypeptide: UDP-N-acetylenolpyruvoylglucosamine reductase (334 aa).

Positions 16-186 (INVFAKKIII…LSVGIKLPKT (171 aa)) constitute an FAD-binding PCMH-type domain. The active site involves Arg-162. Residue Ser-232 is the Proton donor of the active site. The active site involves Glu-329.

Belongs to the MurB family. It depends on FAD as a cofactor.

The protein resides in the cytoplasm. The enzyme catalyses UDP-N-acetyl-alpha-D-muramate + NADP(+) = UDP-N-acetyl-3-O-(1-carboxyvinyl)-alpha-D-glucosamine + NADPH + H(+). Its pathway is cell wall biogenesis; peptidoglycan biosynthesis. Its function is as follows. Cell wall formation. This Buchnera aphidicola subsp. Baizongia pistaciae (strain Bp) protein is UDP-N-acetylenolpyruvoylglucosamine reductase.